A 387-amino-acid chain; its full sequence is 3-ketoacyl-CoA thiolase (387 aa).

Cys-91 (acyl-thioester intermediate) is an active-site residue. Catalysis depends on proton acceptor residues His-343 and Cys-373.

This sequence belongs to the thiolase-like superfamily. Thiolase family. As to quaternary structure, heterotetramer of two alpha chains (FadB) and two beta chains (FadA).

It is found in the cytoplasm. The enzyme catalyses an acyl-CoA + acetyl-CoA = a 3-oxoacyl-CoA + CoA. The protein operates within lipid metabolism; fatty acid beta-oxidation. In terms of biological role, catalyzes the final step of fatty acid oxidation in which acetyl-CoA is released and the CoA ester of a fatty acid two carbons shorter is formed. This Salmonella choleraesuis (strain SC-B67) protein is 3-ketoacyl-CoA thiolase.